Consider the following 341-residue polypeptide: MSSTAMVSGDDSLEPTLQSLLDQKTLRWVFVGGKGGVGKTTTSCSLAIQLAKVRKSVLLISTDPAHNLSDAFGQKFGKEARLVDGFDNLSAMEIDPNGSIQDLLATGGDQADDPMAGLGLGGMMQDLAFSIPGVDEAMSFAEVLKQVKSLSYEVIVFDTAPTGHTLRFLQFPTVLEKALAKLSQLSSQFGPMLNSILGARGGLPGGQNLDEILSKMESLRETIGEVNAQFKDADLTTFVCVCIAEFLSLYETERMIQELTSYQIDTHCIVVNQLLFPGKDSSCEQCKARRKMQKKYLNEIEDLYEDFNVVRMPMLVEEVRGKEKLEKFSNMLVNPYVPPEE.

Residue 34-41 (KGGVGKTT) coordinates ATP. The active site involves Asp63. Positions 245 and 272 each coordinate ATP. Zn(2+) contacts are provided by Cys283 and Cys286.

Belongs to the arsA ATPase family. As to quaternary structure, homodimer.

The protein resides in the cytoplasm. Its subcellular location is the endoplasmic reticulum. In terms of biological role, ATPase required for the post-translational delivery of tail-anchored (TA) proteins to the endoplasmic reticulum. Recognizes and selectively binds the transmembrane domain of TA proteins in the cytosol. This complex then targets to the endoplasmic reticulum by membrane-bound receptors, where the tail-anchored protein is released for insertion. This process is regulated by ATP binding and hydrolysis. ATP binding drives the homodimer towards the closed dimer state, facilitating recognition of newly synthesized TA membrane proteins. ATP hydrolysis is required for insertion. Subsequently, the homodimer reverts towards the open dimer state, lowering its affinity for the membrane-bound receptor, and returning it to the cytosol to initiate a new round of targeting. In Ajellomyces capsulatus (strain H143) (Darling's disease fungus), this protein is ATPase GET3.